The sequence spans 878 residues: Pyruvate dehydrogenase phosphatase regulatory subunit, mitochondrial (878 aa).

A mitochondrion-targeting transit peptide spans 1 to 26; it reads MLPRLLAVVRGPGSCRGWREGSPARG.

It belongs to the GcvT family. In terms of assembly, heterodimer of a catalytic (PDP1) and a regulatory (PDPR) subunit.

It is found in the mitochondrion matrix. In terms of biological role, decreases the sensitivity of PDP1 to magnesium ions, and this inhibition is reversed by the polyamine spermine. The protein is Pyruvate dehydrogenase phosphatase regulatory subunit, mitochondrial (PDPR) of Bos taurus (Bovine).